The following is a 333-amino-acid chain: Transaldolase (333 aa).

Catalysis depends on Lys136, which acts as the Schiff-base intermediate with substrate.

Belongs to the transaldolase family. Type 1 subfamily. As to quaternary structure, homodimer.

It localises to the cytoplasm. The catalysed reaction is D-sedoheptulose 7-phosphate + D-glyceraldehyde 3-phosphate = D-erythrose 4-phosphate + beta-D-fructose 6-phosphate. The protein operates within carbohydrate degradation; pentose phosphate pathway; D-glyceraldehyde 3-phosphate and beta-D-fructose 6-phosphate from D-ribose 5-phosphate and D-xylulose 5-phosphate (non-oxidative stage): step 2/3. In terms of biological role, transaldolase is important for the balance of metabolites in the pentose-phosphate pathway. In Acidobacterium capsulatum (strain ATCC 51196 / DSM 11244 / BCRC 80197 / JCM 7670 / NBRC 15755 / NCIMB 13165 / 161), this protein is Transaldolase.